The sequence spans 361 residues: Phospho-N-acetylmuramoyl-pentapeptide-transferase (361 aa).

The next 10 helical transmembrane spans lie at 25–45, 73–93, 98–118, 139–159, 168–188, 200–220, 237–257, 264–284, 289–309, and 339–359; these read RGIL…PAVI, TMGG…WGDL, VWLV…DDWI, IFGL…AAIT, IALP…IVGF, GLAI…AYAS, AGEL…FLWF, VFMG…IAVI, MVLV…MIQV, and VIVR…ATLK.

This sequence belongs to the glycosyltransferase 4 family. MraY subfamily. Requires Mg(2+) as cofactor.

It is found in the cell inner membrane. The enzyme catalyses UDP-N-acetyl-alpha-D-muramoyl-L-alanyl-gamma-D-glutamyl-meso-2,6-diaminopimeloyl-D-alanyl-D-alanine + di-trans,octa-cis-undecaprenyl phosphate = di-trans,octa-cis-undecaprenyl diphospho-N-acetyl-alpha-D-muramoyl-L-alanyl-D-glutamyl-meso-2,6-diaminopimeloyl-D-alanyl-D-alanine + UMP. It functions in the pathway cell wall biogenesis; peptidoglycan biosynthesis. Catalyzes the initial step of the lipid cycle reactions in the biosynthesis of the cell wall peptidoglycan: transfers peptidoglycan precursor phospho-MurNAc-pentapeptide from UDP-MurNAc-pentapeptide onto the lipid carrier undecaprenyl phosphate, yielding undecaprenyl-pyrophosphoryl-MurNAc-pentapeptide, known as lipid I. The sequence is that of Phospho-N-acetylmuramoyl-pentapeptide-transferase from Xanthomonas axonopodis pv. citri (strain 306).